A 518-amino-acid polypeptide reads, in one-letter code: MTQLHFDNRLRQQLPGYQEEGARRREVRAAWSAVMPTPVAAPYLIAHSAEMAHVLGLDASEVASAAFAQVFGGNALYPGMQPWAVNYGGHQFGHWAGQLGDGRAISLGEAIGIDGGRYELQLKGAGPTPYSRGADGRAVLRSSIREFLCSESMHHLGVPTTRALSLVGTGDAVVRDMFYDGRPQREPGAIVCRVAPSFIRFGNFELPSARGDNALLRQWVDFTIARDFPELVGTAEALYADWFAQVCQRTAVMVAHWMRVGFVHGVMNTDNMSILGLTIDYGPYGWVDDYDPDWTPNTTDAQGRRYRFGTQPQVAYWNLGRLAQAVAPLFADQAPLQQGLNRFRDTYLACDRRDTAAKLGLAECRDEDLELIDALRALMRDAEMDMTLTFRGLIDLSPVHPDPAQLHDAFYDDHKRVASASQLQEWLQRYAARLQQDALSPDERRALMRLANPRYVLRNYLAQQAIDQAEQGDPSGVQELLEVMRRPYDDQSGRAAFAARRPEWARDRAGCSMLSCSS.

ATP contacts are provided by glycine 100, glycine 102, arginine 103, lysine 123, aspartate 135, glycine 136, arginine 193, and arginine 200. Catalysis depends on aspartate 270, which acts as the Proton acceptor. Mg(2+) contacts are provided by asparagine 271 and aspartate 280. Aspartate 280 provides a ligand contact to ATP.

It belongs to the SELO family. Mg(2+) is required as a cofactor. It depends on Mn(2+) as a cofactor.

It catalyses the reaction L-seryl-[protein] + ATP = 3-O-(5'-adenylyl)-L-seryl-[protein] + diphosphate. It carries out the reaction L-threonyl-[protein] + ATP = 3-O-(5'-adenylyl)-L-threonyl-[protein] + diphosphate. The enzyme catalyses L-tyrosyl-[protein] + ATP = O-(5'-adenylyl)-L-tyrosyl-[protein] + diphosphate. The catalysed reaction is L-histidyl-[protein] + UTP = N(tele)-(5'-uridylyl)-L-histidyl-[protein] + diphosphate. It catalyses the reaction L-seryl-[protein] + UTP = O-(5'-uridylyl)-L-seryl-[protein] + diphosphate. It carries out the reaction L-tyrosyl-[protein] + UTP = O-(5'-uridylyl)-L-tyrosyl-[protein] + diphosphate. Nucleotidyltransferase involved in the post-translational modification of proteins. It can catalyze the addition of adenosine monophosphate (AMP) or uridine monophosphate (UMP) to a protein, resulting in modifications known as AMPylation and UMPylation. The chain is Protein nucleotidyltransferase YdiU from Xanthomonas oryzae pv. oryzae (strain PXO99A).